We begin with the raw amino-acid sequence, 59 residues long: Large ribosomal subunit protein bL32 (59 aa).

The span at 1 to 16 (MAVPKRKTSPSKRGMR) shows a compositional bias: basic residues. A disordered region spans residues 1–59 (MAVPKRKTSPSKRGMRRSADALKAPTYIEDKNSGELRRPHHIDLKTGMYRGRSVLPPKD). The segment covering 28–44 (IEDKNSGELRRPHHIDL) has biased composition (basic and acidic residues).

It belongs to the bacterial ribosomal protein bL32 family.

The sequence is that of Large ribosomal subunit protein bL32 from Bartonella quintana (strain Toulouse) (Rochalimaea quintana).